A 218-amino-acid chain; its full sequence is Transcription initiation factor TFIID subunit 10 (218 aa).

Composition is skewed to low complexity over residues 1 to 21 (MSCS…ASAP) and 29 to 39 (APAALPSSTAA). Residues 1-85 (MSCSGSGADP…GAAPVSAGGA (85 aa)) are disordered. Serine 2 bears the N-acetylserine mark. Serine 44 bears the Phosphoserine mark. Threonine 48 bears the Phosphothreonine mark. Over residues 48 to 62 (TAGGPGAGAAAGGTG) the composition is skewed to gly residues. The [KR]-[STA]-K motif signature appears at 187-189 (KSK). Lysine 189 is modified (allysine; alternate). N6,N6,N6-trimethyllysine; alternate is present on lysine 189.

This sequence belongs to the TAF10 family. In terms of assembly, component of the TFIID basal transcription factor complex, composed of TATA-box-binding protein TBP, and a number of TBP-associated factors (TAFs), including TAF1, TAF2, TAF3, TAF4, TAF5, TAF6, TAF7, TAF8, TAF9, TAF10, TAF11, TAF12 and TAF13. Component of the TATA-binding protein-free TAF complex (TFTC), the PCAF histone acetylase complex and the STAGA transcription coactivator-HAT complex. The PCAF complex consists at least of TADA2L/ADA2, TADA3L/ADA3, SUPT3H, TAF5L TAF6L, TAF9, TAF10, TAF12 and TRRAP. The TFTC-HAT complex consists at least of TAF5L, TAF6L, TADA3L, SUPT3H, TAF2, TAF4, TAF5, GCN5L2/GCN5, TAF10 and TRRAP. The STAGA transcription coactivator-HAT complex consists at least of SUPT3H, GCN5L2, TAF5L, TAF6L, SUPT7L, TADA3L, TAD1L, TAF10, TAF12, TRRAP and TAF9. The STAGA core complex is associated with a subcomplex required for histone deubiquitination composed of ATXN7L3, ENY2 and USP22. Interacts with TAF3. Interacts with LOXL2. Interacts with TAF12 isoform TAFII20; the interaction is direct. Post-translationally, monomethylated at Lys-189 by SETD7, leading to increased affinity for RNA polymerase II. Lysine deamination at Lys-189 to form allysine is mediated by LOXL2. Allysine formation by LOXL2 results in release of TAF10 from promoters, leading to inhibition of TFIID-dependent transcription.

The protein resides in the nucleus. The TFIID basal transcription factor complex plays a major role in the initiation of RNA polymerase II (Pol II)-dependent transcription. TFIID recognizes and binds promoters with or without a TATA box via its subunit TBP, a TATA-box-binding protein, and promotes assembly of the pre-initiation complex (PIC). The TFIID complex consists of TBP and TBP-associated factors (TAFs), including TAF1, TAF2, TAF3, TAF4, TAF5, TAF6, TAF7, TAF8, TAF9, TAF10, TAF11, TAF12 and TAF13. TAF10 is also component of the PCAF histone acetylase complex, the TATA-binding protein-free TAF complex (TFTC) and the STAGA transcription coactivator-HAT complex. May regulate cyclin E expression. The sequence is that of Transcription initiation factor TFIID subunit 10 (TAF10) from Homo sapiens (Human).